A 279-amino-acid chain; its full sequence is Acyl-coenzyme A thioesterase MBLAC2 (279 aa).

Ser-2 is subject to N-acetylserine. His-83, His-85, Asp-87, His-88, His-170, Asp-189, and His-231 together coordinate Zn(2+). A lipid anchor (S-palmitoyl cysteine) is attached at Cys-254.

The protein belongs to the metallo-beta-lactamase superfamily. Glyoxalase II family. Zn(2+) is required as a cofactor. Palmitoylated on Cys-254 by ZDHHC20.

The protein resides in the endoplasmic reticulum membrane. It localises to the cell membrane. The catalysed reaction is hexadecanoyl-CoA + H2O = hexadecanoate + CoA + H(+). The enzyme catalyses dodecanoyl-CoA + H2O = dodecanoate + CoA + H(+). It catalyses the reaction tetradecanoyl-CoA + H2O = tetradecanoate + CoA + H(+). It carries out the reaction octadecanoyl-CoA + H2O = octadecanoate + CoA + H(+). The catalysed reaction is a beta-lactam + H2O = a substituted beta-amino acid. Functionally, acyl-CoA thioesterases are a group of enzymes that catalyze the hydrolysis of acyl-CoAs to the free fatty acid and coenzyme A (CoASH), providing the potential to regulate intracellular levels of acyl-CoAs, free fatty acids and CoASH. Has an acyl-CoA thioesterase activity towards the long chain fatty acyl-CoA thioester palmitoyl-CoA (hexadecanoyl-CoA; C16:0-CoA). Displays a substrate preference for fatty acyl-CoAs with chain-lengths C12-C18. In Bos taurus (Bovine), this protein is Acyl-coenzyme A thioesterase MBLAC2 (MBLAC2).